The following is a 342-amino-acid chain: Flagellar P-ring protein (342 aa).

Residues 1–19 form the signal peptide; the sequence is MKRVFLWLIFVLAFHKLLA.

It belongs to the FlgI family. The basal body constitutes a major portion of the flagellar organelle and consists of four rings (L,P,S, and M) mounted on a central rod.

The protein localises to the periplasm. The protein resides in the bacterial flagellum basal body. In terms of biological role, assembles around the rod to form the L-ring and probably protects the motor/basal body from shearing forces during rotation. The chain is Flagellar P-ring protein from Helicobacter pylori (strain P12).